The following is a 149-amino-acid chain: UPF0208 membrane protein VFMJ11_0876 (149 aa).

Helical transmembrane passes span 41 to 61 and 69 to 89; these read FAVK…MVFN and AIII…WLGN.

It belongs to the UPF0208 family.

It localises to the cell inner membrane. This Aliivibrio fischeri (strain MJ11) (Vibrio fischeri) protein is UPF0208 membrane protein VFMJ11_0876.